The following is a 431-amino-acid chain: Histidine--tRNA ligase (431 aa).

The protein belongs to the class-II aminoacyl-tRNA synthetase family. Homodimer.

The protein localises to the cytoplasm. The enzyme catalyses tRNA(His) + L-histidine + ATP = L-histidyl-tRNA(His) + AMP + diphosphate + H(+). This Neisseria meningitidis serogroup A / serotype 4A (strain DSM 15465 / Z2491) protein is Histidine--tRNA ligase.